Here is an 806-residue protein sequence, read N- to C-terminus: Lon protease (806 aa).

One can recognise a Lon N-terminal domain in the interval 14–207 (YPVLPLRDIV…KALGFMEGEI (194 aa)). Residue 359–366 (GPPGVGKT) coordinates ATP. The Lon proteolytic domain occupies 594-775 (DDQVGVVTGL…GEVIAHALLR (182 aa)). Active-site residues include Ser681 and Lys724. Residues 786-806 (SQPAALPSVDSQDEAGTSIAH) are disordered.

Belongs to the peptidase S16 family. In terms of assembly, homohexamer. Organized in a ring with a central cavity.

It is found in the cytoplasm. It catalyses the reaction Hydrolysis of proteins in presence of ATP.. Its function is as follows. ATP-dependent serine protease that mediates the selective degradation of mutant and abnormal proteins as well as certain short-lived regulatory proteins. Required for cellular homeostasis and for survival from DNA damage and developmental changes induced by stress. Degrades polypeptides processively to yield small peptide fragments that are 5 to 10 amino acids long. Binds to DNA in a double-stranded, site-specific manner. In R.meliloti it is important for controlling the turnover of a constitutively expressed protein(s) that, when unregulated, disrupts normal nodule formation and normal growth. The polypeptide is Lon protease (Rhizobium meliloti (strain 1021) (Ensifer meliloti)).